The chain runs to 510 residues: Lysine--tRNA ligase (510 aa).

Residues Glu420 and Glu427 each coordinate Mg(2+).

Belongs to the class-II aminoacyl-tRNA synthetase family. In terms of assembly, homodimer. Mg(2+) is required as a cofactor.

The protein localises to the cytoplasm. It carries out the reaction tRNA(Lys) + L-lysine + ATP = L-lysyl-tRNA(Lys) + AMP + diphosphate. This Vibrio vulnificus (strain CMCP6) protein is Lysine--tRNA ligase.